The sequence spans 180 residues: Acireductone dioxygenase (180 aa).

Fe(2+) contacts are provided by histidine 97, histidine 99, glutamate 103, and histidine 141. Ni(2+)-binding residues include histidine 97, histidine 99, glutamate 103, and histidine 141.

It belongs to the acireductone dioxygenase (ARD) family. As to quaternary structure, monomer. Requires Fe(2+) as cofactor. The cofactor is Ni(2+).

It catalyses the reaction 1,2-dihydroxy-5-(methylsulfanyl)pent-1-en-3-one + O2 = 3-(methylsulfanyl)propanoate + CO + formate + 2 H(+). The catalysed reaction is 1,2-dihydroxy-5-(methylsulfanyl)pent-1-en-3-one + O2 = 4-methylsulfanyl-2-oxobutanoate + formate + 2 H(+). It participates in amino-acid biosynthesis; L-methionine biosynthesis via salvage pathway; L-methionine from S-methyl-5-thio-alpha-D-ribose 1-phosphate: step 5/6. In terms of biological role, catalyzes 2 different reactions between oxygen and the acireductone 1,2-dihydroxy-3-keto-5-methylthiopentene (DHK-MTPene) depending upon the metal bound in the active site. Fe-containing acireductone dioxygenase (Fe-ARD) produces formate and 2-keto-4-methylthiobutyrate (KMTB), the alpha-ketoacid precursor of methionine in the methionine recycle pathway. Ni-containing acireductone dioxygenase (Ni-ARD) produces methylthiopropionate, carbon monoxide and formate, and does not lie on the methionine recycle pathway. This Cronobacter sakazakii (Enterobacter sakazakii) protein is Acireductone dioxygenase.